The following is a 308-amino-acid chain: Ribosomal RNA large subunit methyltransferase F (308 aa).

The protein belongs to the methyltransferase superfamily. METTL16/RlmF family.

The protein resides in the cytoplasm. It carries out the reaction adenosine(1618) in 23S rRNA + S-adenosyl-L-methionine = N(6)-methyladenosine(1618) in 23S rRNA + S-adenosyl-L-homocysteine + H(+). Its function is as follows. Specifically methylates the adenine in position 1618 of 23S rRNA. The chain is Ribosomal RNA large subunit methyltransferase F from Escherichia coli (strain K12 / MC4100 / BW2952).